A 279-amino-acid polypeptide reads, in one-letter code: 2-dehydro-3-deoxyphosphooctonate aldolase (279 aa).

This sequence belongs to the KdsA family.

The protein localises to the cytoplasm. It carries out the reaction D-arabinose 5-phosphate + phosphoenolpyruvate + H2O = 3-deoxy-alpha-D-manno-2-octulosonate-8-phosphate + phosphate. It functions in the pathway carbohydrate biosynthesis; 3-deoxy-D-manno-octulosonate biosynthesis; 3-deoxy-D-manno-octulosonate from D-ribulose 5-phosphate: step 2/3. Its pathway is bacterial outer membrane biogenesis; lipopolysaccharide biosynthesis. This chain is 2-dehydro-3-deoxyphosphooctonate aldolase, found in Bartonella henselae (strain ATCC 49882 / DSM 28221 / CCUG 30454 / Houston 1) (Rochalimaea henselae).